A 23-amino-acid polypeptide reads, in one-letter code: Prolamin alpha-3 (23 aa).

In Dactylis glomerata (Orchard grass), this protein is Prolamin alpha-3.